The sequence spans 243 residues: tRNA (guanine-N(1)-)-methyltransferase (243 aa).

S-adenosyl-L-methionine is bound by residues glycine 111 and 130-135 (IGDYVL).

The protein belongs to the RNA methyltransferase TrmD family. Homodimer.

The protein localises to the cytoplasm. It catalyses the reaction guanosine(37) in tRNA + S-adenosyl-L-methionine = N(1)-methylguanosine(37) in tRNA + S-adenosyl-L-homocysteine + H(+). Specifically methylates guanosine-37 in various tRNAs. This chain is tRNA (guanine-N(1)-)-methyltransferase, found in Acholeplasma laidlawii (strain PG-8A).